The primary structure comprises 894 residues: MGIQTATASDVAQHTPMMQQYLRIKAEHPGTLVFYRMGDFYELFFEDAEKAARLLDLTLTQRGASAGNPIKMAGVPHHAVEQYLAKLVKLGESVAICEQIGDPATSKGPVERKVVRVVTPGTLTDAALLSDKNDVYLLAMCVAHNRRGVATSVGLAWLNLASGALRLAELAPDQVAAALERIRPAEVLVADTPGDAASWTPPVNAGALTRVPVWHFDIASGTQRLCDQLEVAGLDGFGAHSLTCAWGAAGALLLYAAATQGQQLRHVRSLKVEYESEYIGLDPATRRNLELTETLRGTESPTLCSLLDTCCTTMGSRLLRHWLHHPPRESAVAQARQQAIGALLEAPPGAGVDSLRGALRQISDIERITGRLALLSARPRDLSSLRDTFIALPELRAQLAAVSPNADSLARIDASLEPPQACVELLRRAVAEEPSAMVRDGGVIARGYDAELDELRDISENCGQFLIDLETRERARTGIGNLRVEYNKVHGFYIEVTRGQTDKVPDDYRRRQTLKNAERYITPELKTFEDKALSAQERALARERSLYDALLQALLPFIPDCQRVASALAELDLLAAFGERARALDWVAPTFSPDAGIEIEQGRHPVVEAQVEQFIANDCSLTPERKLLLITGPNMGGKSTFMRQTALIALLAYVGSYVPARRAAFGPIDRIFTRIGAADDLAGGRSTFMVEMTEAAAILNDATPQSLVLMDEIGRGTSTFDGLALAWAIARHLLAHNGCHTLFATHYFELTQLPAEFPQAANVHLSAVEHGHGIVFLHAVSEGPANQSYGLQVAQLAGVPNAVIRAARKHLAYLEQQSAAQPAPQLDLFAAPMPMLLEDADDERDSKAEALVPPAMQALVERLRGIDPNDLRPREALDLLYELHELAAAPDADH.

632 to 639 (GPNMGGKS) provides a ligand contact to ATP.

The protein belongs to the DNA mismatch repair MutS family.

In terms of biological role, this protein is involved in the repair of mismatches in DNA. It is possible that it carries out the mismatch recognition step. This protein has a weak ATPase activity. This Paraburkholderia xenovorans (strain LB400) protein is DNA mismatch repair protein MutS.